A 329-amino-acid polypeptide reads, in one-letter code: Mas-related G-protein coupled receptor member X2 (329 aa).

At 1-33 (MDPTTPAWGTESTTMNGNDQALPLFCGKETLIS) the chain is on the extracellular side. Residues 34–54 (VFLILFIALVGLVGNGFVLWL) traverse the membrane as a helical segment. Residues 55–63 (LGFRMRKNA) are Cytoplasmic-facing. The chain crosses the membrane as a helical span at residues 64–84 (FSVYVLSLAGADFLFLCFQII). At 85–96 (NCLVYLSNVFCS) the chain is on the extracellular side. Residues 97 to 117 (ISINFPSFFITVMTCAYLAGL) traverse the membrane as a helical segment. The Cytoplasmic segment spans residues 118–144 (SMLSTISTERCLSVLWPIWYRCRRPRH). Residues 145–165 (LSAVACVLLWALSLLLSILEG) traverse the membrane as a helical segment. At 166 to 183 (KFCGLFGDGDSGWCQTFD) the chain is on the extracellular side. Residues 184-204 (LITAAWLIFLFMVLCGSSLAL) traverse the membrane as a helical segment. Residues 205-227 (LVRILCGSRGLPLTRLYLTILLT) are Cytoplasmic-facing. The chain crosses the membrane as a helical span at residues 228–248 (VLVFLLCGLPFGIQWFLILWI). The Extracellular portion of the chain corresponds to 249–263 (WKNSDVLFCHIHPVS). The helical transmembrane segment at 264 to 284 (VVLSSLNSSANPIIYFFVGSF) threads the bilayer. At 285–329 (RKQWRLQQPILKLALQRALQDIAEVDHSEGCFRQGTPEMSRSSLV) the chain is on the cytoplasmic side.

The protein belongs to the G-protein coupled receptor 1 family. Mas subfamily.

The protein localises to the cell membrane. Mast cell-specific receptor for basic secretagogues, i.e. cationic amphiphilic drugs, as well as endo- or exogenous peptides, consisting of a basic head group and a hydrophobic core. Recognizes and binds small molecules containing a cyclized tetrahydroisoquinoline (THIQ), such as non-steroidal neuromuscular blocking drugs (NMBDs), including tubocurarine and atracurium. In response to these compounds, mediates pseudo-allergic reactions characterized by histamine release, inflammation and airway contraction. In Pan troglodytes (Chimpanzee), this protein is Mas-related G-protein coupled receptor member X2 (MRGPRX2).